The sequence spans 471 residues: Siroheme synthase 1 (471 aa).

A precorrin-2 dehydrogenase /sirohydrochlorin ferrochelatase region spans residues 1–203 (MEYLPLFAQL…GDTRAAEAVL (203 aa)). NAD(+) is bound by residues 22–23 (EV) and 43–44 (KK). Residue serine 128 is modified to Phosphoserine. The tract at residues 215-471 (GEIILVGAGP…NLRSSVVNLA (257 aa)) is uroporphyrinogen-III C-methyltransferase. An S-adenosyl-L-methionine-binding site is contributed by proline 224. Residue aspartate 247 is the Proton acceptor of the active site. The Proton donor role is filled by lysine 269. S-adenosyl-L-methionine is bound by residues 300–302 (GGD), isoleucine 305, 330–331 (TA), methionine 382, and glycine 411.

In the N-terminal section; belongs to the precorrin-2 dehydrogenase / sirohydrochlorin ferrochelatase family. The protein in the C-terminal section; belongs to the precorrin methyltransferase family.

It catalyses the reaction uroporphyrinogen III + 2 S-adenosyl-L-methionine = precorrin-2 + 2 S-adenosyl-L-homocysteine + H(+). The catalysed reaction is precorrin-2 + NAD(+) = sirohydrochlorin + NADH + 2 H(+). It carries out the reaction siroheme + 2 H(+) = sirohydrochlorin + Fe(2+). Its pathway is cofactor biosynthesis; adenosylcobalamin biosynthesis; precorrin-2 from uroporphyrinogen III: step 1/1. The protein operates within cofactor biosynthesis; adenosylcobalamin biosynthesis; sirohydrochlorin from precorrin-2: step 1/1. It participates in porphyrin-containing compound metabolism; siroheme biosynthesis; precorrin-2 from uroporphyrinogen III: step 1/1. It functions in the pathway porphyrin-containing compound metabolism; siroheme biosynthesis; siroheme from sirohydrochlorin: step 1/1. Its pathway is porphyrin-containing compound metabolism; siroheme biosynthesis; sirohydrochlorin from precorrin-2: step 1/1. Its function is as follows. Multifunctional enzyme that catalyzes the SAM-dependent methylations of uroporphyrinogen III at position C-2 and C-7 to form precorrin-2 via precorrin-1. Then it catalyzes the NAD-dependent ring dehydrogenation of precorrin-2 to yield sirohydrochlorin. Finally, it catalyzes the ferrochelation of sirohydrochlorin to yield siroheme. The protein is Siroheme synthase 1 of Cronobacter sakazakii (strain ATCC BAA-894) (Enterobacter sakazakii).